Consider the following 438-residue polypeptide: Probable chaperone protein ClpB 1 (438 aa).

Residues 1-94 adopt a coiled-coil conformation; that stretch reads MNTADTRQRL…NNRKIEARQA (94 aa). Residues 1 to 118 form a linker region; the sequence is MNTADTRQRL…IADIVSRWTG (118 aa). The interval 128 to 345 is NBD2; it reads ERQKLLGIES…RIDEVILFTP (218 aa). 178 to 185 is an ATP binding site; that stretch reads GPTGVGKT. A C-terminal region spans residues 346–438; that stretch reads LTRENLREIV…ENDAIVMKKK (93 aa).

It belongs to the ClpA/ClpB family. As to quaternary structure, homohexamer. The oligomerization is ATP-dependent.

It localises to the cytoplasm. In terms of biological role, part of a stress-induced multi-chaperone system, it is involved in the recovery of the cell from heat-induced damage, in cooperation with DnaK, DnaJ and GrpE. Acts before DnaK, in the processing of protein aggregates. Protein binding stimulates the ATPase activity; ATP hydrolysis unfolds the denatured protein aggregates, which probably helps expose new hydrophobic binding sites on the surface of ClpB-bound aggregates, contributing to the solubilization and refolding of denatured protein aggregates by DnaK. In Chlorobaculum tepidum (strain ATCC 49652 / DSM 12025 / NBRC 103806 / TLS) (Chlorobium tepidum), this protein is Probable chaperone protein ClpB 1 (clpB1).